The chain runs to 626 residues: tRNA uridine 5-carboxymethylaminomethyl modification enzyme MnmG (626 aa).

13–18 (GGGHAG) is a binding site for FAD. NAD(+) is bound at residue 273 to 287 (GPRYCPSIEDKIHRF).

The protein belongs to the MnmG family. Homodimer. Heterotetramer of two MnmE and two MnmG subunits. FAD is required as a cofactor.

Its subcellular location is the cytoplasm. Its function is as follows. NAD-binding protein involved in the addition of a carboxymethylaminomethyl (cmnm) group at the wobble position (U34) of certain tRNAs, forming tRNA-cmnm(5)s(2)U34. This chain is tRNA uridine 5-carboxymethylaminomethyl modification enzyme MnmG, found in Acinetobacter baumannii (strain SDF).